The primary structure comprises 208 residues: Sexual inducer glycoprotein (208 aa).

An N-terminal signal peptide occupies residues 1-11 (MAVVVVNSATA). Residues Asn89, Asn119, Asn131, Asn139, Asn146, and Asn188 are each glycosylated (N-linked (GlcNAc...) asparagine).

Its function is as follows. The sexual inducer is a glycoprotein synthesized and released by sexual males at about the time they release sperm packets. It is one of the most potent biological effector molecules known: it exhibits full effectiveness in converting asexually growing males and females to the sexual pathway at about 10(-7) m. This Volvox carteri (Green alga) protein is Sexual inducer glycoprotein.